Here is an 834-residue protein sequence, read N- to C-terminus: Periplasmic nitrate reductase (834 aa).

Positions 1–29 (MNLTRREFAKANAAAIAAAAAGLPILVRA) form a signal peptide, tat-type signal. The 4Fe-4S Mo/W bis-MGD-type domain maps to 41 to 97 (LVWNKAPCRFCGTGCSVMVATRDGQVVATHGDIKAEVNRGINCVKGYFLSKIMYGSD). [4Fe-4S] cluster-binding residues include cysteine 48, cysteine 51, cysteine 55, and cysteine 83. Residues lysine 85, glutamine 152, asparagine 177, cysteine 181, 214–221 (WGSNMAEM), 245–249 (STFEH), 264–266 (QTD), methionine 375, glutamine 379, asparagine 485, 511–512 (SD), lysine 534, aspartate 561, and 721–730 (TGRVLEHWHT) each bind Mo-bis(molybdopterin guanine dinucleotide). Substrate is bound at residue phenylalanine 797. Asparagine 805 and lysine 822 together coordinate Mo-bis(molybdopterin guanine dinucleotide).

This sequence belongs to the prokaryotic molybdopterin-containing oxidoreductase family. NasA/NapA/NarB subfamily. Component of the periplasmic nitrate reductase NapAB complex composed of NapA and NapB. Requires [4Fe-4S] cluster as cofactor. Mo-bis(molybdopterin guanine dinucleotide) serves as cofactor. In terms of processing, predicted to be exported by the Tat system. The position of the signal peptide cleavage has not been experimentally proven.

It localises to the periplasm. The catalysed reaction is 2 Fe(II)-[cytochrome] + nitrate + 2 H(+) = 2 Fe(III)-[cytochrome] + nitrite + H2O. In terms of biological role, catalytic subunit of the periplasmic nitrate reductase complex NapAB. Receives electrons from NapB and catalyzes the reduction of nitrate to nitrite. In Pseudomonas aeruginosa (strain LESB58), this protein is Periplasmic nitrate reductase.